Consider the following 336-residue polypeptide: Ferrochelatase (336 aa).

Histidine 206 and glutamate 287 together coordinate Fe cation.

It belongs to the ferrochelatase family.

Its subcellular location is the cytoplasm. The catalysed reaction is heme b + 2 H(+) = protoporphyrin IX + Fe(2+). The protein operates within porphyrin-containing compound metabolism; protoheme biosynthesis; protoheme from protoporphyrin-IX: step 1/1. Functionally, catalyzes the ferrous insertion into protoporphyrin IX. The sequence is that of Ferrochelatase from Neisseria meningitidis serogroup C / serotype 2a (strain ATCC 700532 / DSM 15464 / FAM18).